An 893-amino-acid chain; its full sequence is Protein kintoun (893 aa).

Disordered regions lie at residues 211–243, 372–395, 587–719, 781–821, and 834–893; these read KNAT…VLPM, LSRE…EEAG, EQVH…SIDD, QRKK…QQTA, and PQNN…DEDM. Over residues 214–232 the composition is skewed to basic and acidic residues; sequence TAEEREPHPLEHTYPKKPE. S377 is subject to Phosphoserine. Acidic residues predominate over residues 594–603; that stretch reads QQEEEEEEEQ. Residues 609-626 are compositionally biased toward basic residues; the sequence is HQHKKGNKKQRKRNKKQR. Residues 640–651 show a composition bias toward low complexity; the sequence is QQQQHQKQQQQQ. 2 stretches are compositionally biased toward polar residues: residues 656–667 and 684–694; these read ENSSPESLNAGS and FSECNDSSSVQ. The segment covering 709 to 719 has biased composition (low complexity); the sequence is SISESSSSIDD. Positions 781-797 are enriched in basic residues; the sequence is QRKKNQKRRDCKLRAQQ. A Phosphoserine modification is found at S801. Over residues 836-848 the composition is skewed to low complexity; that stretch reads NNNNRSYSKNNKN. Residues 865–877 are compositionally biased toward basic and acidic residues; that stretch reads NNEEDTKRNEADA. Positions 884 to 893 are enriched in acidic residues; it reads EMDDDDDEDM.

It belongs to the PIH1 family. Kintoun subfamily. Interacts with Pp1alpha-96A, Pp1-87B, Pp1-13C and flw.

It localises to the cytoplasm. In terms of biological role, required for cytoplasmic pre-assembly of axonemal dyneins, thereby playing a central role in motility in cilia and flagella. Involved in pre-assembly of dynein arm complexes in the cytoplasm before intraflagellar transport loads them for the ciliary compartment. The chain is Protein kintoun from Drosophila grimshawi (Hawaiian fruit fly).